Here is a 354-residue protein sequence, read N- to C-terminus: Ornithine cyclodeaminase (354 aa).

Positions 53 and 77 each coordinate L-ornithine. NAD(+)-binding positions include threonine 92, arginine 120, 147 to 148, aspartate 169, threonine 209, 232 to 235, lysine 239, and serine 300; these read AQ and VGGD. Arginine 120 serves as a coordination point for L-ornithine. An L-ornithine-binding site is contributed by aspartate 235. The active-site Proton donor/acceptor is the aspartate 235. Valine 301 is an L-ornithine binding site.

This sequence belongs to the ornithine cyclodeaminase/mu-crystallin family. It depends on NAD(+) as a cofactor.

It catalyses the reaction L-ornithine = L-proline + NH4(+). Its pathway is amino-acid biosynthesis; L-proline biosynthesis; L-proline from L-ornithine: step 1/1. Its activity is regulated as follows. Is subject to substrate inhibition. Is regulated by L-arginine, which stimulates enzymatic activity at 0.1-1 mM while inhibits activity at higher concentrations, and has pronounced effects on the optima for pH and temperature and on the Km for L-ornithine. Is not inhibited by L-proline. Catalyzes the conversion of L-ornithine into L-proline with release of ammonia. Is involved in the utilization of nopaline, a catabolic pathway that proceeds through L-arginine and L-ornithine to L-proline. Nopaline is a predominant opine in plant cells transformed with Ti plasmid pTiC58. The chain is Ornithine cyclodeaminase from Agrobacterium fabrum (strain C58 / ATCC 33970) (Agrobacterium tumefaciens (strain C58)).